We begin with the raw amino-acid sequence, 236 residues long: Small ribosomal subunit protein uS3 (236 aa).

Residues 39–107 enclose the KH type-2 domain; that stretch reads VREFLKKSLS…PAQISITEIK (69 aa).

Belongs to the universal ribosomal protein uS3 family. As to quaternary structure, part of the 30S ribosomal subunit. Forms a tight complex with proteins S10 and S14.

Binds the lower part of the 30S subunit head. Binds mRNA in the 70S ribosome, positioning it for translation. The chain is Small ribosomal subunit protein uS3 from Wigglesworthia glossinidia brevipalpis.